We begin with the raw amino-acid sequence, 370 residues long: Vasopressin V2 receptor (370 aa).

Positions 1 to 10 are enriched in polar residues; it reads MLLASTTSAV. Residues 1 to 26 are disordered; sequence MLLASTTSAVPRTLSPPTPAGNGSRE. Topologically, residues 1–37 are extracellular; it reads MLLASTTSAVPRTLSPPTPAGNGSRELLDTRDPLLVQ. The N-linked (GlcNAc...) asparagine glycan is linked to asparagine 22. A helical membrane pass occupies residues 38–62; that stretch reads AELALLSTVFVAVALSNGLVLGALA. Residues 63-76 are Cytoplasmic-facing; it reads RRVRRGRWAPMHVF. The chain crosses the membrane as a helical span at residues 77-97; sequence IGHLCLADLAVALFQVLPQLA. At 98-112 the chain is on the extracellular side; it reads WDATDRFRGPDALCR. A helical membrane pass occupies residues 113–134; sequence AVKYLQMVGMYASSYMILAMTL. Residues 135–158 are Cytoplasmic-facing; sequence DRHRAICRPMLAYRHGGGARWNRP. Residues 159 to 179 traverse the membrane as a helical segment; sequence VLVAWAFSLILSLPQLFIFAQ. Over 180–199 the chain is Extracellular; that stretch reads RDVGNGSGVLDCWAHFAEPW. The helical transmembrane segment at 200–219 threads the bilayer; sequence GLRAYVTWIALMVFVAPALG. Residues 220 to 270 are Cytoplasmic-facing; it reads IAACQVLIFREIHSSLVPGPAERAGGCRGGHRTGSPSEGARVSAAMAKTVR. Residues 271–292 form a helical membrane-spanning segment; sequence MTLVIVIVYVLCWAPFFLVQLW. Residues 293–307 are Extracellular-facing; sequence AAWDPQAPLEGAPFV. Residues 308–327 traverse the membrane as a helical segment; the sequence is LLMLLASLNSCTNPWIYAFF. The Cytoplasmic portion of the chain corresponds to 328–370; that stretch reads SSSVSSELRSLFCWARSRAPPSLGPQEESCATASSFLAKDTSS. Residue cysteine 340 is the site of S-palmitoyl cysteine attachment.

Belongs to the G-protein coupled receptor 1 family. Vasopressin/oxytocin receptor subfamily. As to quaternary structure, interacts with ARRDC4. Identified in a complex containing at least ARRDC4, V2R and HGS. Interacts with TMEM147.

The protein resides in the cell membrane. Receptor for arginine vasopressin. The activity of this receptor is mediated by G proteins which activate adenylate cyclase. Involved in renal water reabsorption. In Canis lupus familiaris (Dog), this protein is Vasopressin V2 receptor (AVPR2).